A 157-amino-acid polypeptide reads, in one-letter code: Phosphomannomutase (157 aa).

The Phosphoserine intermediate role is filled by S98. Mg(2+) is bound at residue S98.

It belongs to the phosphohexose mutase family. The cofactor is Mg(2+).

The catalysed reaction is alpha-D-mannose 1-phosphate = D-mannose 6-phosphate. Its pathway is nucleotide-sugar biosynthesis; GDP-alpha-D-mannose biosynthesis; alpha-D-mannose 1-phosphate from D-fructose 6-phosphate: step 2/2. It participates in capsule biogenesis; capsule polysaccharide biosynthesis. Functionally, involved in the biosynthesis of the K2 capsular polysaccharide biosynthesis. The protein is Phosphomannomutase (manB) of Klebsiella pneumoniae.